Reading from the N-terminus, the 179-residue chain is Endoribonuclease YbeY (179 aa).

H141, H145, and H151 together coordinate Zn(2+).

This sequence belongs to the endoribonuclease YbeY family. Zn(2+) serves as cofactor.

It localises to the cytoplasm. In terms of biological role, single strand-specific metallo-endoribonuclease involved in late-stage 70S ribosome quality control and in maturation of the 3' terminus of the 16S rRNA. The polypeptide is Endoribonuclease YbeY (Synechocystis sp. (strain ATCC 27184 / PCC 6803 / Kazusa)).